A 380-amino-acid polypeptide reads, in one-letter code: Serpin B7 (380 aa).

2 positions are modified to phosphoserine: S217 and S223.

Belongs to the serpin family. Ov-serpin subfamily. Predominantly expressed in mesangial cells. Expressed in the epidermis of the whole body.

The protein resides in the cytoplasm. In terms of biological role, might function as an inhibitor of Lys-specific proteases. Might influence the maturation of megakaryocytes via its action as a serpin. The polypeptide is Serpin B7 (SERPINB7) (Homo sapiens (Human)).